The following is a 406-amino-acid chain: MFPFSYPADDRWLLPEGIEELLPEEAERLELLRRRVLDRFAAWGYRLVMPPLIEFIDSLLTGAGHDLDIQTFKLIDQASGRLLGIRADMTPQVARIDARTHAGDTPGRFCYLGSVLHTQADRLEKSRSPIQFGAELYGHSGRASDLEIIRLMLEVLTTAGVERIHLDLGHVGIFRGLARQAGLTGEQEGELFSLLQQKARPELTAAVASLDIDPPLARMFTELVDLNGRHGVMERARECLSEANAAVHMALEELAVLAERLGDCCPEVPVNFDLAELRGYRYQTGVVFAAFVPGYGREIARGGRYDDIGKVFGRARPATGFSADLKVVLRLSGLGESFVGSGEAIFAPAVSDPALIAAIRELRDAGRIVIEALPGQQGDAAAHGFRSELRRNGERWCVCPVASKDT.

Belongs to the class-II aminoacyl-tRNA synthetase family. HisZ subfamily. Heteromultimer composed of HisG and HisZ subunits.

It is found in the cytoplasm. The protein operates within amino-acid biosynthesis; L-histidine biosynthesis; L-histidine from 5-phospho-alpha-D-ribose 1-diphosphate: step 1/9. Required for the first step of histidine biosynthesis. May allow the feedback regulation of ATP phosphoribosyltransferase activity by histidine. The chain is ATP phosphoribosyltransferase regulatory subunit from Methylococcus capsulatus (strain ATCC 33009 / NCIMB 11132 / Bath).